A 241-amino-acid chain; its full sequence is tRNA pseudouridine synthase A (241 aa).

The active-site Nucleophile is aspartate 52. Position 111 (tyrosine 111) interacts with substrate.

This sequence belongs to the tRNA pseudouridine synthase TruA family. Homodimer.

It carries out the reaction uridine(38/39/40) in tRNA = pseudouridine(38/39/40) in tRNA. Functionally, formation of pseudouridine at positions 38, 39 and 40 in the anticodon stem and loop of transfer RNAs. This Ureaplasma parvum serovar 3 (strain ATCC 27815 / 27 / NCTC 11736) protein is tRNA pseudouridine synthase A.